Here is a 417-residue protein sequence, read N- to C-terminus: uncharacterized protein (417 aa).

2 disordered regions span residues 1–41 (MDSE…EDQA) and 233–262 (QDSA…STRS). A compositionally biased stretch (basic and acidic residues) spans 31–41 (DEDHIFHEDQA). Polar residues predominate over residues 235-245 (SAYNDQAPSTS).

This is an uncharacterized protein from Caenorhabditis elegans.